Reading from the N-terminus, the 132-residue chain is MSKTMIEKVDEVLETEVCAADQKMINLFGRLNNRKHELMREKKAKQEDLEKATDSQDDLFIADDDSKFKYSMGEAFLEVNKEDAESLIEKYINKLEEDIKKIDSDINDINEKHKELKVILYAKFKNSINLEE.

Belongs to the prefoldin subunit beta family. In terms of assembly, heterohexamer of two PFD-alpha type and four PFD-beta type subunits.

Functionally, binds specifically to cytosolic chaperonin (c-CPN) and transfers target proteins to it. Binds to nascent polypeptide chain and promotes folding in an environment in which there are many competing pathways for nonnative proteins. The polypeptide is Probable prefoldin subunit 4 (pfdn4) (Dictyostelium discoideum (Social amoeba)).